A 603-amino-acid polypeptide reads, in one-letter code: Variable flagella 3 (603 aa).

Positions 169 to 289 (GGEVSAELRR…TEDLEARDRR (121 aa)) form a coiled coil. Residues 288–297 (RRMNSTDRIR) show a composition bias toward basic and acidic residues. 2 disordered regions span residues 288–526 (RRMN…PARA) and 539–564 (AGRG…SSKS). Positions 337–348 (SRSNSRGRGTSS) are enriched in low complexity. The segment covering 364 to 380 (PRFDPTEYVRQRKERES) has biased composition (basic and acidic residues). The span at 397–406 (AGTSRASSVV) shows a compositional bias: polar residues. The segment covering 486–510 (GASGGGAGGWSKFPGGGGGGVGGSG) has biased composition (gly residues). A compositionally biased stretch (polar residues) spans 511–520 (QRISSNSPRS).

Belongs to the CCDC61 family.

The protein localises to the cytoplasm. It is found in the cytoskeleton. The protein resides in the flagellum basal body. Functionally, required for normal flagella and striated fiber formation. This is Variable flagella 3 from Chlamydomonas reinhardtii (Chlamydomonas smithii).